A 664-amino-acid chain; its full sequence is Two-component response regulator ARR2 (664 aa).

Positions 1–21 (MVNPGHGRGPDSGTAAGGSNS) are disordered. The 116-residue stretch at 29–144 (RVLVVDDDPT…ALKNIWQHVV (116 aa)) folds into the Response regulatory domain. Asp-80 is subject to 4-aspartylphosphate. Residues 151 to 215 (WNVSEHSGGS…DDKEDSSSLK (65 aa)) are disordered. The segment covering 165-178 (GGDRDRQQQHREDA) has biased composition (basic and acidic residues). Positions 180–191 (NNSSSVNEGNGR) are enriched in polar residues. Residues 200–209 (EVDDQGDDKE) are compositionally biased toward acidic residues. Residues 215–218 (KKPR) carry the Nuclear localization signal motif. Residues 218-268 (RVVWSVELHQQFVAAVNQLGVDKAVPKKILEMMNVPGLTRENVASHLQKYR) constitute a DNA-binding region (myb-like GARP). The span at 554-567 (AAFSTSEAYSSSST) shows a compositional bias: low complexity. The interval 554–589 (AAFSTSEAYSSSSTQRKRRETDATVVGEHGQNLQSP) is disordered.

It belongs to the ARR family. Type-B subfamily. As to quaternary structure, binds the target DNA as a monomer. Interacts with histidine-containing phosphotransfer proteins. Post-translationally, two-component system major event consists of a His-to-Asp phosphorelay between a sensor histidine kinase (HK) and a response regulator (RR). In plants, the His-to-Asp phosphorelay involves an additional intermediate named Histidine-containing phosphotransfer protein (HPt). This multistep phosphorelay consists of a His-Asp-His-Asp sequential transfer of a phosphate group between first a His and an Asp of the HK protein, followed by the transfer to a conserved His of the HPt protein and finally the transfer to an Asp in the receiver domain of the RR protein. Phosphorylated in response to cytokinin mediated by AHK3. As to expression, detected in the whole plant. Predominantly expressed in pollen.

The protein resides in the nucleus. Functionally, transcriptional activator that binds specifically to the DNA sequence 5'-[AG]GATT-3'. Functions as a response regulator involved in His-to-Asp phosphorelay signal transduction system. Phosphorylation of the Asp residue in the receiver domain activates the ability of the protein to promote the transcription of target genes. Could directly activate some type-A response regulators in response to cytokinins. Involved in the expression of nuclear genes for components of mitochondrial complex I. Promotes cytokinin-mediated leaf longevity. Involved in the ethylene signaling pathway in an ETR1-dependent manner and in the cytokinin signaling pathway. This is Two-component response regulator ARR2 (ARR2) from Arabidopsis thaliana (Mouse-ear cress).